Here is a 337-residue protein sequence, read N- to C-terminus: Heme A synthase (337 aa).

Transmembrane regions (helical) follow at residues 6–26, 87–107, 119–139, 154–174, and 192–212; these read ITKW…IGGI, FIHR…LIYF, LPYI…WYMV, LAFH…QLIK, and LIFS…GALV. H256 is a heme binding site. The next 3 membrane-spanning stretches (helical) occupy residues 258 to 278, 285 to 305, and 308 to 328; these read LVGY…LKIE, IAYF…ITLL, and VPII…SIII. Residue H316 participates in heme binding.

This sequence belongs to the COX15/CtaA family. Type 2 subfamily. In terms of assembly, interacts with CtaB. Heme b is required as a cofactor.

The protein resides in the cell membrane. It carries out the reaction Fe(II)-heme o + 2 A + H2O = Fe(II)-heme a + 2 AH2. It participates in porphyrin-containing compound metabolism; heme A biosynthesis; heme A from heme O: step 1/1. Functionally, catalyzes the conversion of heme O to heme A by two successive hydroxylations of the methyl group at C8. The first hydroxylation forms heme I, the second hydroxylation results in an unstable dihydroxymethyl group, which spontaneously dehydrates, resulting in the formyl group of heme A. This is Heme A synthase from Rickettsia africae (strain ESF-5).